The sequence spans 543 residues: UBP9-binding protein bun62 (543 aa).

Phosphoserine is present on Ser43. WD repeat units lie at residues 239 to 279 (LNSS…QPLH), 320 to 361 (FSKS…DVFH), 362 to 401 (SYFA…LVAR), 404 to 448 (GHKS…IHRP), and 513 to 542 (VDDS…TWQR).

In terms of assembly, interacts with ubp9 and bun107.

It is found in the nucleus. It localises to the cytoplasm. The protein resides in the cell tip. Its function is as follows. Required for the ubp9 recruitment to septa and cell tips but also for its enzymatic activity at these specific locations. The sequence is that of UBP9-binding protein bun62 (bun62) from Schizosaccharomyces pombe (strain 972 / ATCC 24843) (Fission yeast).